The sequence spans 257 residues: NAD-capped RNA hydrolase NudC (257 aa).

Arg-69 serves as a coordination point for substrate. Residues Cys-98 and Cys-101 each contribute to the Zn(2+) site. Glu-111 is a binding site for substrate. Cys-116 and Cys-119 together coordinate Zn(2+). Position 124 (Tyr-124) interacts with substrate. One can recognise a Nudix hydrolase domain in the interval 125–248 (PQIAPCIIVA…TVARRLIEDT (124 aa)). 3 residues coordinate a divalent metal cation: Ala-158, Glu-174, and Glu-178. Residues 159 to 180 (GFVEVGETLEQAAAREIFEESR) carry the Nudix box motif. 192 to 199 (QPWPFPHS) is a substrate binding site. A divalent metal cation is bound at residue Glu-219. Ala-241 is a binding site for substrate.

The protein belongs to the Nudix hydrolase family. NudC subfamily. In terms of assembly, homodimer. Mg(2+) serves as cofactor. The cofactor is Mn(2+). It depends on Zn(2+) as a cofactor.

The catalysed reaction is a 5'-end NAD(+)-phospho-ribonucleoside in mRNA + H2O = a 5'-end phospho-adenosine-phospho-ribonucleoside in mRNA + beta-nicotinamide D-ribonucleotide + 2 H(+). The enzyme catalyses NAD(+) + H2O = beta-nicotinamide D-ribonucleotide + AMP + 2 H(+). It carries out the reaction NADH + H2O = reduced beta-nicotinamide D-ribonucleotide + AMP + 2 H(+). MRNA decapping enzyme that specifically removes the nicotinamide adenine dinucleotide (NAD) cap from a subset of mRNAs by hydrolyzing the diphosphate linkage to produce nicotinamide mononucleotide (NMN) and 5' monophosphate mRNA. The NAD-cap is present at the 5'-end of some mRNAs and stabilizes RNA against 5'-processing. Has preference for mRNAs with a 5'-end purine. Catalyzes the hydrolysis of a broad range of dinucleotide pyrophosphates. This Edwardsiella ictaluri (strain 93-146) protein is NAD-capped RNA hydrolase NudC.